A 150-amino-acid chain; its full sequence is Urease accessory protein UreE (150 aa).

This sequence belongs to the UreE family.

It localises to the cytoplasm. Its function is as follows. Involved in urease metallocenter assembly. Binds nickel. Probably functions as a nickel donor during metallocenter assembly. The protein is Urease accessory protein UreE of Parasynechococcus marenigrum (strain WH8102).